The chain runs to 273 residues: Glutamate 5-kinase (273 aa).

K15 serves as a coordination point for ATP. Substrate-binding residues include S55, D142, and N158. ATP is bound by residues 178–179 (SD) and 220–226 (TGGMLSK).

The protein belongs to the glutamate 5-kinase family.

It is found in the cytoplasm. The enzyme catalyses L-glutamate + ATP = L-glutamyl 5-phosphate + ADP. Its pathway is amino-acid biosynthesis; L-proline biosynthesis; L-glutamate 5-semialdehyde from L-glutamate: step 1/2. Its function is as follows. Catalyzes the transfer of a phosphate group to glutamate to form L-glutamate 5-phosphate. This is Glutamate 5-kinase from Streptococcus pyogenes serotype M3 (strain ATCC BAA-595 / MGAS315).